The primary structure comprises 117 residues: MARAQVLLMAAALVLMLTAAPRAAVALNCGQVDSKMKPCLTYVQGGPGPSGECCNGVRDLHNQAQSSGDRQTVCNCLKGIARGIHNLNLNNAASIPSKCNVNVPYTISPDIDCSRIY.

The signal sequence occupies residues 1–26 (MARAQVLLMAAALVLMLTAAPRAAVA). 4 cysteine pairs are disulfide-bonded: Cys29/Cys76, Cys39/Cys53, Cys54/Cys99, and Cys74/Cys113. Residue Asp33 is the site of Cis-14-hydroxy-10,13-dioxo-7-heptadecenoic acid aspartate ester attachment.

This sequence belongs to the plant LTP family. As to expression, aleurone layer of developing and germinating seeds.

In terms of biological role, plant non-specific lipid-transfer proteins transfer phospholipids as well as galactolipids across membranes. May play a role in wax or cutin deposition in the cell walls of expanding epidermal cells and certain secretory tissues. In Hordeum vulgare (Barley), this protein is Non-specific lipid-transfer protein 1 (LTP1).